Reading from the N-terminus, the 45-residue chain is Photosystem II reaction center protein K (45 aa).

Positions 1–8 (MEAALLLA) are excised as a propeptide. Residues 24–44 (LPIIPVFFLLLAFVWQAAVGF) form a helical membrane-spanning segment.

Belongs to the PsbK family. As to quaternary structure, PSII is composed of 1 copy each of membrane proteins PsbA, PsbB, PsbC, PsbD, PsbE, PsbF, PsbH, PsbI, PsbJ, PsbK, PsbL, PsbM, PsbT, PsbX, PsbY, PsbZ, Psb30/Ycf12, peripheral proteins PsbO, CyanoQ (PsbQ), PsbU, PsbV and a large number of cofactors. It forms dimeric complexes.

The protein localises to the cellular thylakoid membrane. One of the components of the core complex of photosystem II (PSII). PSII is a light-driven water:plastoquinone oxidoreductase that uses light energy to abstract electrons from H(2)O, generating O(2) and a proton gradient subsequently used for ATP formation. It consists of a core antenna complex that captures photons, and an electron transfer chain that converts photonic excitation into a charge separation. The sequence is that of Photosystem II reaction center protein K from Nostoc sp. (strain PCC 7120 / SAG 25.82 / UTEX 2576).